Reading from the N-terminus, the 289-residue chain is Shikimate dehydrogenase (NADP(+)) (289 aa).

Residues 20-22 (SIS) and S67 contribute to the shikimate site. The active-site Proton acceptor is the K71. D83 lines the NADP(+) pocket. Positions 92 and 107 each coordinate shikimate. Residues 132–136 (GGGGA) and V230 each bind NADP(+). Position 232 (Y232) interacts with shikimate. G253 contacts NADP(+).

The protein belongs to the shikimate dehydrogenase family. Homodimer.

It carries out the reaction shikimate + NADP(+) = 3-dehydroshikimate + NADPH + H(+). It participates in metabolic intermediate biosynthesis; chorismate biosynthesis; chorismate from D-erythrose 4-phosphate and phosphoenolpyruvate: step 4/7. Functionally, involved in the biosynthesis of the chorismate, which leads to the biosynthesis of aromatic amino acids. Catalyzes the reversible NADPH linked reduction of 3-dehydroshikimate (DHSA) to yield shikimate (SA). The polypeptide is Shikimate dehydrogenase (NADP(+)) (Streptococcus suis (strain 98HAH33)).